The chain runs to 316 residues: Apolipoprotein E (316 aa).

An N-terminal signal peptide occupies residues 1–18; sequence MKVLWVALVITLLAGCQA. A run of 8 repeats spans residues 79–100, 101–122, 123–144, 145–166, 167–188, 189–210, 211–232, and 233–254. Residues 79–254 form an 8 X 22 AA approximate tandem repeats region; the sequence is VLMDETMKEV…HLEEMREQLE (176 aa). M142 carries the post-translational modification Methionine sulfoxide. The interval 157 to 167 is LDL and other lipoprotein receptors binding; the sequence is HLRKLRKRLLR. Position 161–164 (161–164) interacts with heparin; it reads LRKR. Residues 209–289 are lipid-binding and lipoprotein association; the sequence is AATVGTLASQ…SWFEPLVEDM (81 aa). Residue 228–235 participates in heparin binding; sequence HQKLRGRM. The interval 265-316 is homooligomerization; it reads SQMRLQAEAFQARLKSWFEPLVEDMQRQWAGLVEKVQLAMATSPTSAPIENS. The segment at 277–289 is specificity for association with VLDL; that stretch reads RLKSWFEPLVEDM.

It belongs to the apolipoprotein A1/A4/E family. Homotetramer. May interact with ABCA1; functionally associated with ABCA1 in the biogenesis of HDLs. May interact with APP/A4 amyloid-beta peptide; the interaction is extremely stable in vitro but its physiological significance is unclear. May interact with MAPT. May interact with MAP2. In the cerebrospinal fluid, interacts with secreted SORL1. Interacts with PMEL; this allows the loading of PMEL luminal fragment on ILVs to induce fibril nucleation. Post-translationally, APOE exists as multiple glycosylated and sialylated glycoforms within cells and in plasma. The extent of glycosylation and sialylation are tissue and context specific. In terms of processing, glycated in plasma VLDL. Phosphorylated by FAM20C in the extracellular medium.

The protein localises to the secreted. It localises to the extracellular space. Its subcellular location is the extracellular matrix. It is found in the extracellular vesicle. The protein resides in the endosome. The protein localises to the multivesicular body. Functionally, APOE is an apolipoprotein, a protein associating with lipid particles, that mainly functions in lipoprotein-mediated lipid transport between organs via the plasma and interstitial fluids. APOE is a core component of plasma lipoproteins and is involved in their production, conversion and clearance. Apolipoproteins are amphipathic molecules that interact both with lipids of the lipoprotein particle core and the aqueous environment of the plasma. As such, APOE associates with chylomicrons, chylomicron remnants, very low density lipoproteins (VLDL) and intermediate density lipoproteins (IDL) but shows a preferential binding to high-density lipoproteins (HDL). It also binds a wide range of cellular receptors including the LDL receptor/LDLR and the very low-density lipoprotein receptor/VLDLR that mediate the cellular uptake of the APOE-containing lipoprotein particles. Finally, APOE also has a heparin-binding activity and binds heparan-sulfate proteoglycans on the surface of cells, a property that supports the capture and the receptor-mediated uptake of APOE-containing lipoproteins by cells. This chain is Apolipoprotein E (APOE), found in Orcinus orca (Killer whale).